The following is a 264-amino-acid chain: Proteasome assembly chaperone 2 (264 aa).

At Thr-137 the chain carries Phosphothreonine.

Belongs to the PSMG2 family. Forms a heterodimer with PSMG1. The PSMG1-PSMG2 heterodimer interacts directly with the PSMA5 and PSMA7 proteasome alpha subunits. In terms of processing, degraded by the proteasome upon completion of 20S proteasome maturation. Widely expressed with highest levels in lung, brain and colon. Moderately expressed in muscle, stomach, spleen and heart. Weakly expressed in small intestine, pancreas and liver. Highly expressed in hepatocellular carcinomas with low levels in surrounding liver tissue.

The protein resides in the nucleus. Its function is as follows. Chaperone protein which promotes assembly of the 20S proteasome as part of a heterodimer with PSMG1. The PSMG1-PSMG2 heterodimer binds to the PSMA5 and PSMA7 proteasome subunits, promotes assembly of the proteasome alpha subunits into the heteroheptameric alpha ring and prevents alpha ring dimerization. In Homo sapiens (Human), this protein is Proteasome assembly chaperone 2.